The following is a 519-amino-acid chain: Sorting nexin-2 (519 aa).

The span at 30–50 (STVSTLESSPSSPEPASLPAE) shows a compositional bias: low complexity. The disordered stretch occupies residues 30–62 (STVSTLESSPSSPEPASLPAEDISANSNGSKPV). Residue S97 is modified to Phosphoserine. Phosphothreonine is present on residues T101 and T104. A phosphoserine mark is found at S117 and S119. One can recognise a PX domain in the interval 140 to 269 (FDIEIGVSDP…QFLESSELPR (130 aa)). A 1,2-diacyl-sn-glycero-3-phospho-(1D-myo-inositol-3-phosphate)-binding residues include R183, S185, K211, and R235. S185 is subject to Phosphoserine. The segment at 260-519 (QFLESSELPR…AFLPEAKAIA (260 aa)) is interaction with RhoG. S277 is modified (phosphoserine). The membrane-binding amphipathic helix stretch occupies residues 278–295 (GAGILRMVNKAADAVNKM). Positions 299-519 (MNESDAWFEE…AFLPEAKAIA (221 aa)) constitute a BAR domain. N6-acetyllysine is present on K469.

It belongs to the sorting nexin family. As to quaternary structure, predominantly forms heterodimers with BAR domain-containing sorting nexins SNX5, SNX6 and SNX32; can self-associate to form homodimers. The heterodimers are proposed to self-assemble into helical arrays on the membrane to stabilize and expand local membrane curvature underlying endosomal tubule formation. Thought to be a component of the originally described retromer complex (also called SNX-BAR retromer) which is a pentamer containing the heterotrimeric retromer cargo-selective complex (CSC), also described as vacuolar protein sorting subcomplex (VPS), and a heterodimeric membrane-deforming subcomplex formed between SNX1 or SNX2 and SNX5 or SNX6 (also called SNX-BAR subcomplex); the respective CSC and SNX-BAR subcomplexes associate with low affinity. Interacts with SNX5, SNX6, SNX32, VPS26A, VPS29, VPS35, FNBP1, KALRN, RHOG (GDP-bound form).

The protein resides in the early endosome membrane. It localises to the cell projection. It is found in the lamellipodium. In terms of biological role, involved in several stages of intracellular trafficking. Interacts with membranes containing phosphatidylinositol 3-phosphate (PtdIns(3P)) or phosphatidylinositol 3,5-bisphosphate (PtdIns(3,5)P2). Acts in part as component of the retromer membrane-deforming SNX-BAR subcomplex. The SNX-BAR retromer mediates retrograde transport of cargo proteins from endosomes to the trans-Golgi network (TGN) and is involved in endosome-to-plasma membrane transport for cargo protein recycling. The SNX-BAR subcomplex functions to deform the donor membrane into a tubular profile called endosome-to-TGN transport carrier (ETC). Can sense membrane curvature and has in vitro vesicle-to-membrane remodeling activity. Required for retrograde endosome-to-TGN transport of TGN38. Promotes KALRN- and RHOG-dependent but retromer-independent membrane remodeling such as lamellipodium formation; the function is dependent on GEF activity of KALRN. The polypeptide is Sorting nexin-2 (Snx2) (Mus musculus (Mouse)).